The following is a 179-amino-acid chain: Cell division protein ZapC (179 aa).

This sequence belongs to the ZapC family. As to quaternary structure, interacts directly with FtsZ.

The protein resides in the cytoplasm. Its function is as follows. Contributes to the efficiency of the cell division process by stabilizing the polymeric form of the cell division protein FtsZ. Acts by promoting interactions between FtsZ protofilaments and suppressing the GTPase activity of FtsZ. The protein is Cell division protein ZapC of Photobacterium profundum (strain SS9).